The primary structure comprises 151 residues: Large-conductance mechanosensitive channel (151 aa).

2 helical membrane-spanning segments follow: residues 12–32 (GNIVDLAVAVVIGTAFTALVT) and 71–91 (VLLSATINFILVAGVVYFLVV). The tract at residues 125-151 (NSNSSGRHEAPGTAGTPPPNYGPRADT) is disordered.

Belongs to the MscL family. As to quaternary structure, homopentamer.

It localises to the cell membrane. In terms of biological role, channel that opens in response to stretch forces in the membrane lipid bilayer. May participate in the regulation of osmotic pressure changes within the cell. The protein is Large-conductance mechanosensitive channel of Mycobacterium ulcerans (strain Agy99).